Consider the following 192-residue polypeptide: MVFGSKVIKAGNGEPDAFETQIGQAILELEMNSDLKPQLRDLYITRAREVEFNNKKAIIIYVPVPKQKAFQKVQTRLVRELEKKFSGKHVVFIAERRILPKPMRGRRDPNKQKRPRSRTLTAVYDAILEDLVFPAEVVGKRIRVKLDGSQLIKVHLDKNQQTTIEHKVDTFASVYKKLTGRDVTFEFPENYL.

This sequence belongs to the eukaryotic ribosomal protein eS7 family.

This is Small ribosomal subunit protein eS7 (RpS7) from Anopheles gambiae (African malaria mosquito).